Reading from the N-terminus, the 323-residue chain is Melanocortin receptor 3 (323 aa).

At 1–37 (MNASCCLPSVQPTLPNGSEHLQAPFFSNQSSSAFCEQ) the chain is on the extracellular side. Asn2, Asn16, and Asn28 each carry an N-linked (GlcNAc...) asparagine glycan. Residues 38-63 (VFIKPEVFLSLGIVSLLENILVILAV) form a helical membrane-spanning segment. Topologically, residues 64-75 (VRNGNLHSPMYF) are cytoplasmic. The chain crosses the membrane as a helical span at residues 76–100 (FLCSLAVADMLVSVSNALETIMIAI). Residues 101–118 (VHSDYLTFEDQFIQHMDN) lie on the Extracellular side of the membrane. The chain crosses the membrane as a helical span at residues 119–140 (IFDSMICISLVASICNLLAIAV). Residues 141 to 160 (DRYVTIFYALRYHSIMTVRK) are Cytoplasmic-facing. Residues 161–181 (ALTLIVAIWVCCGVCGVVFIV) traverse the membrane as a helical segment. Topologically, residues 182-186 (YSESK) are extracellular. Residues 187 to 210 (MVIVCLITMFFAMMLLMGTLYVHM) traverse the membrane as a helical segment. The Cytoplasmic portion of the chain corresponds to 211 to 245 (FLFARLHVKRIAALPPADGVAPQQHSCMKGAVTIT). Residues 246–268 (ILLGVFIFCWAPFFLHLVLIITC) traverse the membrane as a helical segment. The Extracellular segment spans residues 269 to 277 (PTNPYCICY). A helical membrane pass occupies residues 278–301 (TAHFNTYLVLIMCNSVIDPLIYAF). The Cytoplasmic segment spans residues 302 to 323 (RSLELRNTFREILCGCNGMNLG). Cys315 is lipidated: S-palmitoyl cysteine.

The protein belongs to the G-protein coupled receptor 1 family. Brain, placental, and gut tissues.

It is found in the cell membrane. In terms of biological role, receptor for MSH (alpha, beta and gamma) and ACTH. This receptor is mediated by G proteins which activate adenylate cyclase. Required for expression of anticipatory patterns of activity and wakefulness during periods of limited nutrient availability and for the normal regulation of circadian clock activity in the brain. This Homo sapiens (Human) protein is Melanocortin receptor 3 (MC3R).